The following is a 398-amino-acid chain: Acetate kinase (398 aa).

Residue asparagine 7 participates in Mg(2+) binding. Residue lysine 14 participates in ATP binding. Arginine 91 contributes to the substrate binding site. The active-site Proton donor/acceptor is the aspartate 148. ATP-binding positions include 208–212, 283–285, and 331–335; these read HIGNG, DMR, and GVGEN. A Mg(2+)-binding site is contributed by glutamate 384.

Belongs to the acetokinase family. As to quaternary structure, homodimer. It depends on Mg(2+) as a cofactor. Mn(2+) serves as cofactor.

Its subcellular location is the cytoplasm. The enzyme catalyses acetate + ATP = acetyl phosphate + ADP. Its pathway is metabolic intermediate biosynthesis; acetyl-CoA biosynthesis; acetyl-CoA from acetate: step 1/2. Catalyzes the formation of acetyl phosphate from acetate and ATP. Can also catalyze the reverse reaction. This Bacteroides fragilis (strain ATCC 25285 / DSM 2151 / CCUG 4856 / JCM 11019 / LMG 10263 / NCTC 9343 / Onslow / VPI 2553 / EN-2) protein is Acetate kinase.